The primary structure comprises 432 residues: Short transient receptor potential channel 2 homolog (432 aa).

Helical transmembrane passes span 1–21, 52–72, 96–116, and 162–182; these read MVIL…AGLA, FLAE…LASI, FMFI…NIYV, and LYGI…IAMI. The interval 356-432 is disordered; it reads QNLGPPIPET…EADLGAKEGT (77 aa). Residues 387–404 show a composition bias toward low complexity; that stretch reads AGGAQAPASGESGPSSPA.

The protein belongs to the transient receptor (TC 1.A.4) family. STrpC subfamily. TRPC2 sub-subfamily.

It localises to the membrane. In terms of biological role, thought to form a receptor-activated calcium permeant cation channel. The chain is Short transient receptor potential channel 2 homolog (TRPC2) from Bos taurus (Bovine).